Consider the following 195-residue polypeptide: Calcineurin B homologous protein 1 (195 aa).

Gly2 carries N-myristoyl glycine lipidation. Residues Gly2–Ser6 carry the Necessary for association with microtubule and interaction with GAPDH motif. 4 consecutive EF-hand domains span residues Ser26–Pro61, Phe71–Glu106, Ser110–Val145, and Gln151–Glu186. The Ca(2+) site is built by Asp123, Asp125, Asp127, Lys129, and Glu134. The short motif at Val138–Ile147 is the Nuclear export signal 1 element. Asp164, Asp166, Asp168, and Glu175 together coordinate Ca(2+). The Nuclear export signal 2 signature appears at Phe176 to Val185.

It belongs to the calcineurin regulatory subunit family. CHP subfamily. As to quaternary structure, monomer. Interacts with STK17B; the interaction occurs in a calcium-independent manner and induces the translocation of CHP1 from the Golgi to the nucleus. Interacts with GAPDH; the interaction is direct, occurs in a N-myristoylation-dependent manner and facilitates the ability of CHP1 to bind microtubules. Interacts with KIF1B (via the C-terminal end of the kinesin-motor domain); the interaction occurs in a calcium-dependent manner. Associates (via C-terminal domain) with microtubules; the association occurs with polymerized microtubules during the cell cycle in a myristoylation- and calcium-independent manner and is enhanced by GAPDH. Interacts with PPP3CA. Interacts with SLC9A1/NHE1 (via the cytoplasmic C-terminal domain); the interaction occurs at the plasma membrane in a calcium-dependent manner and at a domain that is critical for growth factor stimulation of the exchanger. Interacts with SLC9A3; increases SLC9A3 trafficking and activity at the plasma membrane. Phosphorylated; decreased phosphorylation is associated with an increase in SLC9A1/NHE1 Na(+)/H(+) exchange activity. Phosphorylation occurs in serum-dependent manner. The phosphorylation state may regulate the binding to SLC9A1/NHE1. Post-translationally, both N-myristoylation and calcium-mediated conformational changes are essential for its function in exocytic traffic. N-myristoylation is required for its association with microtubules and interaction with GAPDH, but not for the constitutive association to membranes.

The protein resides in the nucleus. It is found in the cytoplasm. The protein localises to the cytoskeleton. It localises to the endomembrane system. Its subcellular location is the endoplasmic reticulum-Golgi intermediate compartment. The protein resides in the endoplasmic reticulum. It is found in the cell membrane. The protein localises to the membrane. Functionally, calcium-binding protein involved in different processes such as regulation of vesicular trafficking, plasma membrane Na(+)/H(+) exchanger and gene transcription. Involved in the constitutive exocytic membrane traffic. Mediates the association between microtubules and membrane-bound organelles of the endoplasmic reticulum and Golgi apparatus and is also required for the targeting and fusion of transcytotic vesicles (TCV) with the plasma membrane. Functions as an integral cofactor in cell pH regulation by controlling plasma membrane-type Na(+)/H(+) exchange activity. Affects the pH sensitivity of SLC9A1/NHE1 by increasing its sensitivity at acidic pH. Required for the stabilization and localization of SLC9A1/NHE1 at the plasma membranes. Inhibits serum- and GTPase-stimulated Na(+)/H(+) exchange. Plays a role as an inhibitor of ribosomal RNA transcription by repressing the nucleolar UBF1 transcriptional activity. May sequester UBF1 in the nucleoplasm and limit its translocation to the nucleolus. Associates to the ribosomal gene promoter. Acts as a negative regulator of the calcineurin/NFAT signaling pathway. Inhibits NFAT nuclear translocation and transcriptional activity by suppressing the calcium-dependent calcineurin phosphatase activity. Also negatively regulates the kinase activity of the apoptosis-induced kinase STK17B. Inhibits both STK17B auto- and substrate-phosphorylations in a calcium-dependent manner. This chain is Calcineurin B homologous protein 1 (Chp1), found in Mus musculus (Mouse).